The chain runs to 343 residues: Fc receptor-like protein 1 (343 aa).

The N-terminal stretch at 1-16 (MLPWLLLLICALPCEP) is a signal peptide. 2 Ig-like C2-type domains span residues 17–109 (AGIS…VSIH) and 117–200 (PVLT…EVVA). Residues 17 to 219 (AGISDVSLKT…PTENGISHLS (203 aa)) lie on the Extracellular side of the membrane. Residue Asn-51 is glycosylated (N-linked (GlcNAc...) asparagine). An intrachain disulfide couples Cys-138 to Cys-185. Asn-202 carries an N-linked (GlcNAc...) asparagine glycan. The helical transmembrane segment at 220-240 (LGLTGWLLGCLSPITMALIFC) threads the bilayer. Residues 241–343 (YWLKRKIGRQ…IAHMDYEDAM (103 aa)) lie on the Cytoplasmic side of the membrane. The tract at residues 251 to 278 (SEDPVRSPPQTVLQGSTYPKSPDSRQPE) is disordered. A compositionally biased stretch (polar residues) spans 258-269 (PPQTVLQGSTYP). 3 short sequence motifs (ITIM motif) span residues 266–271 (STYPKS), 279–284 (PLYENV), and 291–296 (EVYSLV). Tyr-281 is subject to Phosphotyrosine. Tyr-297 carries the phosphotyrosine modification. 2 short sequence motifs (ITIM motif) span residues 325-330 (GLYSKP) and 337-342 (MDYEDA).

As to quaternary structure, interacts with ABL1. Interacts with GRB2 and SOS1. Interacts with SHIP-1/INPP5D. Post-translationally, phosphorylated on C-terminal region upon BCR ligation leading to recruitment of ABL1. Widely expressed. Expressed in B-cells at the various stages of differentiation.

The protein localises to the cell membrane. May function as an activating coreceptor in B-cells. May function in B-cells activation and differentiation. The protein is Fc receptor-like protein 1 (Fcrl1) of Mus musculus (Mouse).